A 162-amino-acid chain; its full sequence is MNSRTASARGWFSSRPPTSESDLEPATDGPASETTTLSPEATTFNDTRIPDAAGGTAGVGTMLLSFGIITVIGLAVALVLYIRKKKRLEKLRHQLMPMYNFDPTEEQDELEQELLEHGRDAASVQAATSVQAMQGKTTLPSQGPLQRPSRLVFTDVANAIHA.

The segment at 1 to 49 is disordered; that stretch reads MNSRTASARGWFSSRPPTSESDLEPATDGPASETTTLSPEATTFNDTRI. A compositionally biased stretch (polar residues) spans 32-46; sequence SETTTLSPEATTFND. Residues 62–82 form a helical membrane-spanning segment; it reads MLLSFGIITVIGLAVALVLYI.

The protein localises to the membrane. This is an uncharacterized protein from Homo sapiens (Human).